Reading from the N-terminus, the 526-residue chain is Zinc finger protein 69 homolog (526 aa).

Residues 1–39 (MPQQLLITLPTEASTWVKLQHPKKAVEGAPLWEDVTKMF) form the SCAN box domain. One can recognise a KRAB domain in the interval 76–147 (LTFKDISIDF…EKEGPGDPSS (72 aa)). 9 consecutive C2H2-type zinc fingers follow at residues 271 to 293 (YECN…MRIH), 299 to 321 (FRCK…QRIH), 327 to 349 (FECE…HRTH), 355 to 377 (YVCD…LRTH), 383 to 405 (FTCN…IRIH), 411 to 433 (YACT…QRIH), 439 to 461 (YKCK…KTVH), 467 to 489 (YECN…QRHH), and 495 to 517 (YECN…HEIH).

This sequence belongs to the krueppel C2H2-type zinc-finger protein family. In terms of tissue distribution, expressed in visceral and subcutaneous adipose tissue.

The protein resides in the nucleus. Putative transcription factor that appears to regulate lipid metabolism. This Homo sapiens (Human) protein is Zinc finger protein 69 homolog (ZFP69).